Consider the following 114-residue polypeptide: Protein S100-A9 (114 aa).

Thr2 is subject to Blocked amino end (Thr). An S-nitrosocysteine; transient modification is found at Cys3. 2 EF-hand domains span residues 12 to 47 (IETI…DLQN) and 54 to 89 (KNEK…LTWA). Position 20 (His20) interacts with Zn(2+). Residues Ser23, Leu26, and His28 each coordinate Ca(2+). Asp30 lines the Zn(2+) pocket. Ca(2+) contacts are provided by Thr31, Glu36, Asp67, Asn69, Asp71, Gln73, and Glu78. His91 and His95 together coordinate Zn(2+). Basic and acidic residues predominate over residues 93 to 102 (KMHEGDEGPG). Residues 93–114 (KMHEGDEGPGHHHKPGLGEGTP) are disordered. A Pros-methylhistidine modification is found at His105. Thr113 is subject to Phosphothreonine; by MAPK14.

In terms of assembly, homodimer. Preferentially exists as a heterodimer or heterotetramer with S100A8 known as calprotectin (S100A8/A9). S100A9 interacts with ATP2A2. S100A9 interacts with AGER, and with the heterodimeric complex formed by TLR4 and LY96 in the presence of calcium and/or zinc ions. S100A9 binds quinoline-3-carboxamides in the presence of calcium and/or zinc ions. S100A9 interacts with amyloid-beta protein 40. Calprotectin (S100A8/9) interacts with CEACAM3 and tubulin filaments in a calcium-dependent manner. Heterotetrameric calprotectin (S100A8/A9) interacts with ANXA6 and associates with tubulin filaments in activated monocytes. Calprotectin (S100A8/9) interacts with NCF2/P67PHOX, RAC1, RAC2, CYBA and CYBB. Calprotectin (S100A8/9) interacts with NOS2 to form the iNOS-S100A8/A9 transnitrosylase complex; induced by LDL(ox). Calprotectin (S100A8/9) interacts with CD69. Post-translationally, phosphorylated. Phosphorylation inhibits activation of tubulin polymerization. S-nitrosylation of Cys-3 is implicated in LDL(ox)-induced S-nitrosylation of GAPDH at 'Cys-247' through a transnitrosylase mechanism involving a iNOS-S100A8/9 complex. In terms of processing, methylation at His-105 by METTL9 reduces zinc-binding without affecting heterodimerization with S100A8. In terms of tissue distribution, calprotectin (S100A8/9) is predominantly expressed in myeloid cells. Except for inflammatory conditions, the expression is restricted to a specific stage of myeloid differentiation since both proteins are expressed in circulating neutrophils and monocytes but are absent in normal tissue macrophages and lymphocytes. Under chronic inflammatory conditions, such as psoriasis and malignant disorders, also expressed in the epidermis. Found in high concentrations at local sites of inflammation or in the serum of patients with inflammatory diseases such as rheumatoid, cystic fibrosis, inflammatory bowel disease, Crohn's disease, giant cell arteritis, cystic fibrosis, Sjogren's syndrome, systemic lupus erythematosus, and progressive systemic sclerosis. Involved in the formation and deposition of amyloids in the aging prostate known as corpora amylacea inclusions. Strongly up-regulated in many tumors, including gastric, esophageal, colon, pancreatic, bladder, ovarian, thyroid, breast and skin cancers.

The protein localises to the secreted. It is found in the cytoplasm. It localises to the cytoskeleton. The protein resides in the cell membrane. Its function is as follows. S100A9 is a calcium- and zinc-binding protein which plays a prominent role in the regulation of inflammatory processes and immune response. It can induce neutrophil chemotaxis, adhesion, can increase the bactericidal activity of neutrophils by promoting phagocytosis via activation of SYK, PI3K/AKT, and ERK1/2 and can induce degranulation of neutrophils by a MAPK-dependent mechanism. Predominantly found as calprotectin (S100A8/A9) which has a wide plethora of intra- and extracellular functions. The intracellular functions include: facilitating leukocyte arachidonic acid trafficking and metabolism, modulation of the tubulin-dependent cytoskeleton during migration of phagocytes and activation of the neutrophilic NADPH-oxidase. Also participates in regulatory T-cell differentiation together with CD69. Activates NADPH-oxidase by facilitating the enzyme complex assembly at the cell membrane, transferring arachidonic acid, an essential cofactor, to the enzyme complex and S100A8 contributes to the enzyme assembly by directly binding to NCF2/P67PHOX. The extracellular functions involve pro-inflammatory, antimicrobial, oxidant-scavenging and apoptosis-inducing activities. Its pro-inflammatory activity includes recruitment of leukocytes, promotion of cytokine and chemokine production, and regulation of leukocyte adhesion and migration. Acts as an alarmin or a danger associated molecular pattern (DAMP) molecule and stimulates innate immune cells via binding to pattern recognition receptors such as Toll-like receptor 4 (TLR4) and receptor for advanced glycation endproducts (AGER). Binding to TLR4 and AGER activates the MAP-kinase and NF-kappa-B signaling pathways resulting in the amplification of the pro-inflammatory cascade. Has antimicrobial activity towards bacteria and fungi and exerts its antimicrobial activity probably via chelation of Zn(2+) which is essential for microbial growth. Can induce cell death via autophagy and apoptosis and this occurs through the cross-talk of mitochondria and lysosomes via reactive oxygen species (ROS) and the process involves BNIP3. Can regulate neutrophil number and apoptosis by an anti-apoptotic effect; regulates cell survival via ITGAM/ITGB and TLR4 and a signaling mechanism involving MEK-ERK. Its role as an oxidant scavenger has a protective role in preventing exaggerated tissue damage by scavenging oxidants. Can act as a potent amplifier of inflammation in autoimmunity as well as in cancer development and tumor spread. Has transnitrosylase activity; in oxidatively-modified low-densitity lipoprotein (LDL(ox))-induced S-nitrosylation of GAPDH on 'Cys-247' proposed to transfer the NO moiety from NOS2/iNOS to GAPDH via its own S-nitrosylated Cys-3. The iNOS-S100A8/A9 transnitrosylase complex is proposed to also direct selective inflammatory stimulus-dependent S-nitrosylation of multiple targets such as ANXA5, EZR, MSN and VIM by recognizing a [IL]-x-C-x-x-[DE] motif. This chain is Protein S100-A9, found in Homo sapiens (Human).